Consider the following 789-residue polypeptide: MLKGLRKKASILSISSTQSDTPANNYDKVLKQVRDFEIALQAMDFLLDDRTDEGTKLLQKEAQLHSQSGSDQPAGIFPLALGVMEFIEATLGFETEVMERANRTLSEAETASLNNSKYNVKYSLATSYIYPPGTEFQVTYAESTLLNALVMLLKENNGMVEGAKALFKLRRAYQTLDSVYKKIKDSEPIFNKNLSKLKKESLSNMNNISTSDLPGYKSNSSMSSNGGSSASLASDVKLMKDLEKVYQMRKGRIEGTNLGNNAPEKINFFEGFEDRSSNSSIVSSAATSTSNLSTTESATDNQLHVSTVDEFIHSGVQLCFGILQVVLSLIPPAIGKVLSIVGFKGDREIGLKMLWRTAITSRNIHGELALLCLLVFYDGPVQFVDVGFQLPGHEDSKVKDVLSLDGKTTVSESELKKILQNPALYTPQLLKRARAFFPHNALWLLQEGRVLAAQGELEKATQLMQSFTDDKSNKIRMQQVEALLVFDRGMFYAFQHDYDNAARDFVKLIDINSWSKGVYLFMAASCYLEKYRMIEMGLVDVEDKEKELRKYEDLAVKYFELAPTYVPNHGHNSTSKKQLPFDKFLLRKLRHLEERKRQYPKLKFVDLIGTSLIHELVYFWNGYNRMSEKDLQLSLKLLAYSGEVNAELSANSETASYTKIAESEDEAMIRYFLQAIVLRSTGKVSEGLSILENHVISKYVVADLPQFKFNKMTYSPYLYPTALYEKTMFIWILRTTHVEKLDVRKAVQESKNCLKKAEIVGEGDYELSNRTGMRMKAAGDRLDQLGHGH.

The tract at residues 209–231 is disordered; sequence STSDLPGYKSNSSMSSNGGSSAS. The span at 218-231 shows a compositional bias: low complexity; the sequence is SNSSMSSNGGSSAS.

This sequence belongs to the IML2 family. Interacts with lipid droplet proteins.

The protein localises to the cytoplasm. Its subcellular location is the nucleus. Functionally, inclusion body (IB) resident protein that interacts strongly with lipid droplet (LD) proteins. Involved in LD-mediated IB clearing after protein folding stress, probably by enabling access to the IBs of an LD-stored soluble sterol derivative that acts as a chaperone in inclusion clearing. This chain is Inclusion body clearance protein IML2 (IML2), found in Scheffersomyces stipitis (strain ATCC 58785 / CBS 6054 / NBRC 10063 / NRRL Y-11545) (Yeast).